The primary structure comprises 111 residues: Putative membrane protein insertion efficiency factor (111 aa).

The protein belongs to the UPF0161 family.

The protein localises to the cell inner membrane. Functionally, could be involved in insertion of integral membrane proteins into the membrane. The chain is Putative membrane protein insertion efficiency factor from Methylobacterium nodulans (strain LMG 21967 / CNCM I-2342 / ORS 2060).